A 201-amino-acid polypeptide reads, in one-letter code: Large ribosomal subunit protein bL9 (201 aa).

The span at 150–165 (EAERQAAGEDLTQRRD) shows a compositional bias: basic and acidic residues. The segment at 150 to 201 (EAERQAAGEDLTQRRDDEEEEAVEAAEFFESEELAPGDEEEEAAGEEEDAKE) is disordered. Over residues 166-201 (DEEEEAVEAAEFFESEELAPGDEEEEAAGEEEDAKE) the composition is skewed to acidic residues.

The protein belongs to the bacterial ribosomal protein bL9 family.

In terms of biological role, binds to the 23S rRNA. The protein is Large ribosomal subunit protein bL9 of Parvibaculum lavamentivorans (strain DS-1 / DSM 13023 / NCIMB 13966).